A 282-amino-acid chain; its full sequence is D-alanine aminotransferase (282 aa).

Tyr-32 serves as a coordination point for substrate. Arg-51 contacts pyridoxal 5'-phosphate. Substrate is bound by residues Arg-99 and His-101. The active-site Proton acceptor is the Lys-146. An N6-(pyridoxal phosphate)lysine modification is found at Lys-146. Residue Glu-178 coordinates pyridoxal 5'-phosphate.

Belongs to the class-IV pyridoxal-phosphate-dependent aminotransferase family. As to quaternary structure, homodimer. It depends on pyridoxal 5'-phosphate as a cofactor.

It catalyses the reaction D-alanine + 2-oxoglutarate = D-glutamate + pyruvate. In terms of biological role, acts on the D-isomers of alanine, leucine, aspartate, glutamate, aminobutyrate, norvaline and asparagine. The enzyme transfers an amino group from a substrate D-amino acid to the pyridoxal phosphate cofactor to form pyridoxamine and an alpha-keto acid in the first half-reaction. The second half-reaction is the reverse of the first, transferring the amino group from the pyridoxamine to a second alpha-keto acid to form the product D-amino acid via a ping-pong mechanism. This is an important process in the formation of D-alanine and D-glutamate, which are essential bacterial cell wall components. In Staphylococcus aureus (strain N315), this protein is D-alanine aminotransferase (dat).